A 632-amino-acid chain; its full sequence is Extracellular metalloproteinase 1 (632 aa).

A signal peptide spans 1–19; it reads MHGLLLAAGLISLPLHVLA. Positions 20–246 are excised as a propeptide; the sequence is HPQPSSTSLA…VVDYVAHATF (227 aa). An N-linked (GlcNAc...) asparagine glycan is attached at asparagine 284. Threonine 430 is a Zn(2+) binding site. Histidine 431 is a catalytic residue. Residue serine 434 coordinates Zn(2+). N-linked (GlcNAc...) asparagine glycosylation is present at asparagine 591.

Belongs to the peptidase M36 family. It depends on Zn(2+) as a cofactor.

Its subcellular location is the secreted. Its activity is regulated as follows. PMSF, soybean trypsin inhibitor (SBTI) and chymostatin strongly inhibit the proteinase. Its function is as follows. Secreted metalloproteinase probably acting as a virulence factor. This Arthroderma otae (Microsporum canis) protein is Extracellular metalloproteinase 1 (MEP1).